A 303-amino-acid chain; its full sequence is Holdfast attachment protein D (303 aa).

Residues 266 to 281 show a composition bias toward polar residues; that stretch reads SARSTMSGPKSCSTTF. The tract at residues 266–303 is disordered; sequence SARSTMSGPKSCSTTFRPIRAAASRRPPASAGTRAMTR. The span at 282–303 shows a compositional bias: low complexity; sequence RPIRAAASRRPPASAGTRAMTR.

The protein resides in the cell outer membrane. Its function is as follows. Involved in attachment of the holdfast to the cell. The holdfast is a structure that allows the bacteria to firmly adhere to surfaces. The sequence is that of Holdfast attachment protein D (hfaD) from Caulobacter vibrioides (strain ATCC 19089 / CIP 103742 / CB 15) (Caulobacter crescentus).